The chain runs to 271 residues: Probable iron transport system membrane protein HI_0359 (271 aa).

Transmembrane regions (helical) follow at residues 17-37 (ALLT…YLVL), 55-75 (IVLA…SGIF), 93-113 (TAMG…FTKI), 131-151 (SHQE…LIVF), 168-188 (VAGL…ALTI), 194-214 (VVGV…ALTL), 221-241 (MLWV…ILSY), and 245-265 (ASTG…ALAY).

This sequence belongs to the ABC-3 integral membrane protein family.

The protein resides in the cell inner membrane. Functionally, part of an ATP-driven transport system HI_0359/HI_0360/HI_0361/HI_0362 for iron. In Haemophilus influenzae (strain ATCC 51907 / DSM 11121 / KW20 / Rd), this protein is Probable iron transport system membrane protein HI_0359.